The following is a 297-amino-acid chain: uncharacterized protein (297 aa).

It belongs to the metallo-dependent hydrolases superfamily.

This is an uncharacterized protein from Sinorhizobium fredii (strain NBRC 101917 / NGR234).